We begin with the raw amino-acid sequence, 280 residues long: UPF0494 membrane protein C750.06c (280 aa).

4 helical membrane-spanning segments follow: residues 107 to 127 (WPLLIIWSIIIVFAVDKKFEV), 144 to 164 (IWVPIAIYVCLLVLMLLSLIF), 178 to 198 (VIIAVLGAVLGMIIAVLGMII), and 199 to 219 (AALGMIIAALGATITGLLYFG).

Belongs to the UPF0494 family.

It is found in the cytoplasm. The protein localises to the vacuole. Its subcellular location is the membrane. This is UPF0494 membrane protein C750.06c from Schizosaccharomyces pombe (strain 972 / ATCC 24843) (Fission yeast).